Reading from the N-terminus, the 488-residue chain is Catalase (488 aa).

The tract at residues 1 to 26 (MTDRKNLTTNQGVPVGDNQNSMTAGR) is disordered. A compositionally biased stretch (polar residues) spans 7-23 (LTTNQGVPVGDNQNSMT). Catalysis depends on residues His-55 and Asn-128. Tyr-338 provides a ligand contact to heme.

Belongs to the catalase family. Heme is required as a cofactor.

The protein resides in the cytoplasm. It carries out the reaction 2 H2O2 = O2 + 2 H2O. Functionally, decomposes hydrogen peroxide into water and oxygen; serves to protect cells from the toxic effects of hydrogen peroxide. The protein is Catalase (kat) of Listeria monocytogenes serovar 1/2a (strain ATCC BAA-679 / EGD-e).